The chain runs to 337 residues: N-acetyl-gamma-glutamyl-phosphate reductase (337 aa).

Cys149 is a catalytic residue.

This sequence belongs to the NAGSA dehydrogenase family. Type 1 subfamily.

It is found in the cytoplasm. It carries out the reaction N-acetyl-L-glutamate 5-semialdehyde + phosphate + NADP(+) = N-acetyl-L-glutamyl 5-phosphate + NADPH + H(+). Its pathway is amino-acid biosynthesis; L-arginine biosynthesis; N(2)-acetyl-L-ornithine from L-glutamate: step 3/4. Its function is as follows. Catalyzes the NADPH-dependent reduction of N-acetyl-5-glutamyl phosphate to yield N-acetyl-L-glutamate 5-semialdehyde. This Wolinella succinogenes (strain ATCC 29543 / DSM 1740 / CCUG 13145 / JCM 31913 / LMG 7466 / NCTC 11488 / FDC 602W) (Vibrio succinogenes) protein is N-acetyl-gamma-glutamyl-phosphate reductase.